The sequence spans 225 residues: Peptidyl-tRNA hydrolase (225 aa).

Y14 lines the tRNA pocket. H19 (proton acceptor) is an active-site residue. F64, N66, and N112 together coordinate tRNA. Positions 184–225 are disordered; sequence ALRMQPPKPEKPKPAAKAPEAQAPEAAPDERSALQKLADRFR. Residues 198-209 are compositionally biased toward low complexity; that stretch reads AAKAPEAQAPEA. A compositionally biased stretch (basic and acidic residues) spans 211 to 225; it reads PDERSALQKLADRFR.

This sequence belongs to the PTH family. In terms of assembly, monomer.

It localises to the cytoplasm. The catalysed reaction is an N-acyl-L-alpha-aminoacyl-tRNA + H2O = an N-acyl-L-amino acid + a tRNA + H(+). Its function is as follows. Hydrolyzes ribosome-free peptidyl-tRNAs (with 1 or more amino acids incorporated), which drop off the ribosome during protein synthesis, or as a result of ribosome stalling. In terms of biological role, catalyzes the release of premature peptidyl moieties from peptidyl-tRNA molecules trapped in stalled 50S ribosomal subunits, and thus maintains levels of free tRNAs and 50S ribosomes. In Cereibacter sphaeroides (strain ATCC 17023 / DSM 158 / JCM 6121 / CCUG 31486 / LMG 2827 / NBRC 12203 / NCIMB 8253 / ATH 2.4.1.) (Rhodobacter sphaeroides), this protein is Peptidyl-tRNA hydrolase.